A 626-amino-acid polypeptide reads, in one-letter code: Basic helix-loop-helix ARNT-like protein 1 (626 aa).

Residues 1-60 form a disordered region; that stretch reads MADQRMDISSTISDFMSPGPTDLLSSSLGTSGVDCNRKRKGSSTDYQESMDTDKDDPHGR. Phosphoserine; by GSK3-beta is present on Ser-17. Residues 17-32 show a composition bias toward low complexity; the sequence is SPGPTDLLSSSLGTSG. The residue at position 21 (Thr-21) is a Phosphothreonine; by GSK3-beta. Positions 36–41 match the Nuclear localization signal motif; that stretch reads NRKRKG. The span at 51–60 shows a compositional bias: basic and acidic residues; that stretch reads DTDKDDPHGR. Positions 72–125 constitute a bHLH domain; the sequence is NAREAHSQIEKRRRDKMNSFIDELASLVPTCNAMSRKLDKLTVLRMAVQHMKTL. A Phosphoserine modification is found at Ser-78. Residue Ser-90 is modified to Phosphoserine; by CK2. Positions 142–152 match the Nuclear export signal 1 motif; that stretch reads LSDDELKHLIL. The region spanning 143–215 is the PAS 1 domain; that stretch reads SDDELKHLIL…EQLSSSDTAP (73 aa). A Glycyl lysine isopeptide (Lys-Gly) (interchain with G-Cter in SUMO2 and SUMO3) cross-link involves residue Lys-252. Residue Lys-259 forms a Glycyl lysine isopeptide (Lys-Gly) (interchain with G-Cter in SUMO); alternate linkage. A Glycyl lysine isopeptide (Lys-Gly) (interchain with G-Cter in SUMO2); alternate cross-link involves residue Lys-259. The region spanning 326–396 is the PAS 2 domain; that stretch reads PQPAGGDIKV…ECHRQVLQTR (71 aa). Residues 361 to 369 carry the Nuclear export signal 2 motif; it reads LAYLPQELL. The region spanning 402–445 is the PAC domain; it reads NCYKFKIKDGSFITLRSRWFSFMNPWTKEVEYIVSTNTVVLANV. Disordered stretches follow at residues 458–493 and 511–596; these read ASPHSMDSMLPSGEGGPKKTHPTVPGIPGGTRAGAG and GSSP…PSND. The span at 484 to 493 shows a compositional bias: gly residues; that stretch reads IPGGTRAGAG. The tract at residues 508–588 is interaction with CIART; the sequence is RIRGSSPSSC…ISIDMIDNDQ (81 aa). The span at 511–521 shows a compositional bias: low complexity; sequence GSSPSSCGSSP. An N6-acetyllysine modification is found at Lys-538.

As to quaternary structure, component of the circadian clock oscillator which includes the CRY1/2 proteins, CLOCK or NPAS2, BMAL1 or BMAL2, CSNK1D and/or CSNK1E, TIMELESS and the PER1/2/3 proteins. Forms a heterodimer with CLOCK. The CLOCK-BMAL1 heterodimer is required for E-box-dependent transactivation, for CLOCK nuclear translocation and degradation, and, for phosphorylation of both CLOCK and BMAL1. Part of a nuclear complex which also includes RACK1 and PRKCA; RACK1 and PRKCA are recruited to the complex in a circadian manner. Interacts with NPAS2. Interacts with EZH2. Interacts with SUMO3. Interacts with SIRT1. Interacts with AHR. Interacts with ID1, ID2 and ID3. Interacts with DDX4. Interacts with OGT. Interacts with EED and SUZ12. Interacts with MTA1. Interacts with CIART. Interacts with HSP90. Interacts with KAT2B and EP300. Interacts with BHLHE40/DEC1 and BHLHE41/DEC2. Interacts with RELB and the interaction is enhanced in the presence of CLOCK. Interacts with PER1, PER2, CRY1 and CRY2 and this interaction requires a translocation to the nucleus. Interaction of the CLOCK-BMAL1 heterodimer with PER or CRY inhibits transcription activation. Interaction of the CLOCK-BMAL1 with CRY1 is independent of DNA but with PER2 is off DNA. The CLOCK-BMAL1 heterodimer interacts with GSK3B. Interacts with KDM5A. Interacts with KMT2A; in a circadian manner. Interacts with UBE3A. Interacts with PRKCG. Interacts with MAGEL2. Interacts with NCOA2. Interacts with THRAP3. The CLOCK-BMAL1 heterodimer interacts with PASD1. Interacts with PASD1. Interacts with USP9X. Interacts with PIWIL2 (via PIWI domain). Interacts with HDAC3. Interacts with HNF4A. Post-translationally, ubiquitinated, leading to its proteasomal degradation. Deubiquitinated by USP9X. In terms of processing, O-glycosylated; contains O-GlcNAc. O-glycosylation by OGT prevents protein degradation by inhibiting ubiquitination. It also stabilizes the CLOCK-BMAL1 heterodimer thereby increasing CLOCK-BMAL1-mediated transcription of genes in the negative loop of the circadian clock such as PER1/2/3 and CRY1/2. Acetylated on Lys-538 by CLOCK during the repression phase of the circadian cycle. Acetylation facilitates recruitment of CRY1 protein and initiates the repression phase of the circadian cycle. Acetylated at Lys-538 by KAT5 during the activation phase of the cycle, leading to recruitment of the positive transcription elongation factor b (P-TEFb) and BRD4, followed by productive elongation of circadian transcripts. Deacetylated by SIRT1, which may result in decreased protein stability. Post-translationally, phosphorylated upon dimerization with CLOCK. Phosphorylation enhances the transcriptional activity, alters the subcellular localization and decreases the stability of the CLOCK-BMAL1 heterodimer by promoting its degradation. Phosphorylation shows circadian variations in the liver with a peak between CT10 to CT14. Phosphorylation at Ser-90 by CK2 is essential for its nuclear localization, its interaction with CLOCK and controls CLOCK nuclear entry. Dephosphorylation at Ser-78 is important for dimerization with CLOCK and transcriptional activity. In terms of processing, sumoylated on Lys-259 upon dimerization with CLOCK. Predominantly conjugated to poly-SUMO2/3 rather than SUMO1 and the level of these conjugates undergo rhythmic variation, peaking at CT9-CT12. Sumoylation localizes it exclusively to the PML body and promotes its ubiquitination in the PML body, ubiquitin-dependent proteasomal degradation and the transcriptional activity of the CLOCK-BMAL1 heterodimer. Undergoes lysosome-mediated degradation in a time-dependent manner in the liver. Highly expressed in the suprachiasmatic nucleus (SCN). Also expressed in all other tissues examined including kidney, intestine, liver, heart, spleen, brain, muscle, lung, harderian gland and eye. Low expression in kidney and spleen.

It is found in the nucleus. The protein localises to the cytoplasm. It localises to the PML body. In terms of biological role, transcriptional activator which forms a core component of the circadian clock. The circadian clock, an internal time-keeping system, regulates various physiological processes through the generation of approximately 24 hour circadian rhythms in gene expression, which are translated into rhythms in metabolism and behavior. It is derived from the Latin roots 'circa' (about) and 'diem' (day) and acts as an important regulator of a wide array of physiological functions including metabolism, sleep, body temperature, blood pressure, endocrine, immune, cardiovascular, and renal function. Consists of two major components: the central clock, residing in the suprachiasmatic nucleus (SCN) of the brain, and the peripheral clocks that are present in nearly every tissue and organ system. Both the central and peripheral clocks can be reset by environmental cues, also known as Zeitgebers (German for 'timegivers'). The predominant Zeitgeber for the central clock is light, which is sensed by retina and signals directly to the SCN. The central clock entrains the peripheral clocks through neuronal and hormonal signals, body temperature and feeding-related cues, aligning all clocks with the external light/dark cycle. Circadian rhythms allow an organism to achieve temporal homeostasis with its environment at the molecular level by regulating gene expression to create a peak of protein expression once every 24 hours to control when a particular physiological process is most active with respect to the solar day. Transcription and translation of core clock components (CLOCK, NPAS2, BMAL1, BMAL2, PER1, PER2, PER3, CRY1 and CRY2) plays a critical role in rhythm generation, whereas delays imposed by post-translational modifications (PTMs) are important for determining the period (tau) of the rhythms (tau refers to the period of a rhythm and is the length, in time, of one complete cycle). A diurnal rhythm is synchronized with the day/night cycle, while the ultradian and infradian rhythms have a period shorter and longer than 24 hours, respectively. Disruptions in the circadian rhythms contribute to the pathology of cardiovascular diseases, cancer, metabolic syndromes and aging. A transcription/translation feedback loop (TTFL) forms the core of the molecular circadian clock mechanism. Transcription factors, CLOCK or NPAS2 and BMAL1 or BMAL2, form the positive limb of the feedback loop, act in the form of a heterodimer and activate the transcription of core clock genes and clock-controlled genes (involved in key metabolic processes), harboring E-box elements (5'-CACGTG-3') within their promoters. The core clock genes: PER1/2/3 and CRY1/2 which are transcriptional repressors form the negative limb of the feedback loop and interact with the CLOCK|NPAS2-BMAL1|BMAL2 heterodimer inhibiting its activity and thereby negatively regulating their own expression. This heterodimer also activates nuclear receptors NR1D1/2 and RORA/B/G, which form a second feedback loop and which activate and repress BMAL1 transcription, respectively. BMAL1 positively regulates myogenesis and negatively regulates adipogenesis via the transcriptional control of the genes of the canonical Wnt signaling pathway. Plays a role in normal pancreatic beta-cell function; regulates glucose-stimulated insulin secretion via the regulation of antioxidant genes NFE2L2/NRF2 and its targets SESN2, PRDX3, CCLC and CCLM. Negatively regulates the mTORC1 signaling pathway; regulates the expression of MTOR and DEPTOR. Controls diurnal oscillations of Ly6C inflammatory monocytes; rhythmic recruitment of the PRC2 complex imparts diurnal variation to chemokine expression that is necessary to sustain Ly6C monocyte rhythms. Regulates the expression of HSD3B2, STAR, PTGS2, CYP11A1, CYP19A1 and LHCGR in the ovary and also the genes involved in hair growth. Plays an important role in adult hippocampal neurogenesis by regulating the timely entry of neural stem/progenitor cells (NSPCs) into the cell cycle and the number of cell divisions that take place prior to cell-cycle exit. Regulates the circadian expression of CIART and KLF11. The CLOCK-BMAL1 heterodimer regulates the circadian expression of SERPINE1/PAI1, VWF, B3, CCRN4L/NOC, NAMPT, DBP, MYOD1, PPARGC1A, PPARGC1B, SIRT1, GYS2, F7, NGFR, GNRHR, BHLHE40/DEC1, ATF4, MTA1, KLF10 and also genes implicated in glucose and lipid metabolism. Promotes rhythmic chromatin opening, regulating the DNA accessibility of other transcription factors. The NPAS2-BMAL1 heterodimer positively regulates the expression of MAOA, F7 and LDHA and modulates the circadian rhythm of daytime contrast sensitivity by regulating the rhythmic expression of adenylate cyclase type 1 (ADCY1) in the retina. The preferred binding motif for the CLOCK-BMAL1 heterodimer is 5'-CACGTGA-3', which contains a flanking adenine nucleotide at the 3-prime end of the canonical 6-nucleotide E-box sequence. CLOCK specifically binds to the half-site 5'-CAC-3', while BMAL1 binds to the half-site 5'-GTGA-3'. The CLOCK-BMAL1 heterodimer also recognizes the non-canonical E-box motifs 5'-AACGTGA-3' and 5'-CATGTGA-3'. Essential for the rhythmic interaction of CLOCK with ASS1 and plays a critical role in positively regulating CLOCK-mediated acetylation of ASS1. Plays a role in protecting against lethal sepsis by limiting the expression of immune checkpoint protein CD274 in macrophages in a PKM2-dependent manner. Regulates the diurnal rhythms of skeletal muscle metabolism via transcriptional activation of genes promoting triglyceride synthesis (DGAT2) and metabolic efficiency (COQ10B). In Nannospalax galili (Northern Israeli blind subterranean mole rat), this protein is Basic helix-loop-helix ARNT-like protein 1 (Bmal1).